Here is a 500-residue protein sequence, read N- to C-terminus: L-arabinose isomerase (500 aa).

Mn(2+) contacts are provided by Glu306, Glu333, His350, and His450.

This sequence belongs to the arabinose isomerase family. As to quaternary structure, homohexamer. Mn(2+) is required as a cofactor.

The enzyme catalyses beta-L-arabinopyranose = L-ribulose. It participates in carbohydrate degradation; L-arabinose degradation via L-ribulose; D-xylulose 5-phosphate from L-arabinose (bacterial route): step 1/3. In terms of biological role, catalyzes the conversion of L-arabinose to L-ribulose. This chain is L-arabinose isomerase, found in Enterobacter sp. (strain 638).